We begin with the raw amino-acid sequence, 211 residues long: DNA-directed RNA polymerases I, II, and III subunit RPABC1 (211 aa).

This sequence belongs to the archaeal Rpo5/eukaryotic RPB5 RNA polymerase subunit family. As to quaternary structure, component of the RNA polymerase I (Pol I), RNA polymerase II (Pol II) and RNA polymerase III (Pol III) complexes consisting of at least 13, 12 and 17 subunits, respectively. In RNA Pol II, this subunit is present in 2-fold molar excess over the other subunits.

The protein localises to the nucleus. Its function is as follows. DNA-dependent RNA polymerase catalyzes the transcription of DNA into RNA using the four ribonucleoside triphosphates as substrates. Common component of RNA polymerases I, II and III which synthesize ribosomal RNA precursors, mRNA precursors and many functional non-coding RNAs, and small RNAs, such as 5S rRNA and tRNAs, respectively. Pol II is the central component of the basal RNA polymerase II transcription machinery. Pols are composed of mobile elements that move relative to each other. In Pol II, RPB5 is part of the lower jaw surrounding the central large cleft and thought to grab the incoming DNA template. Seems to be the major component in this process. The sequence is that of DNA-directed RNA polymerases I, II, and III subunit RPABC1 from Caenorhabditis briggsae.